Consider the following 152-residue polypeptide: Nascent polypeptide-associated complex subunit beta (152 aa).

Disordered stretches follow at residues 19–39 (IGKG…AGDD) and 125–152 (NMQK…SKVE). Over residues 23-32 (TPRRKVKRAP) the composition is skewed to basic residues. The NAC-A/B domain maps to 36 to 101 (AGDDKKLQAT…GEDKELTELV (66 aa)).

The protein belongs to the NAC-beta family. Part of the nascent polypeptide-associated complex (NAC), consisting of npc-1/egd2 and npc-2/egd1. NAC associates with ribosomes via npc-2/egd1.

Its subcellular location is the cytoplasm. The protein localises to the nucleus. Functionally, component of the nascent polypeptide-associated complex (NAC), a dynamic component of the ribosomal exit tunnel, protecting the emerging polypeptides from interaction with other cytoplasmic proteins to ensure appropriate nascent protein targeting. The NAC complex also promotes mitochondrial protein import by enhancing productive ribosome interactions with the outer mitochondrial membrane and blocks the inappropriate interaction of ribosomes translating non-secretory nascent polypeptides with translocation sites in the membrane of the endoplasmic reticulum. Npc-2/egd1 may act as a transcription factor that exert a negative effect on the expression of several genes that are transcribed by RNA polymerase II. This is Nascent polypeptide-associated complex subunit beta (npc-2) from Neurospora crassa (strain ATCC 24698 / 74-OR23-1A / CBS 708.71 / DSM 1257 / FGSC 987).